We begin with the raw amino-acid sequence, 134 residues long: Prefoldin subunit 4 (134 aa).

Ala-2 bears the N-acetylalanine mark. Phosphoserine is present on Ser-125.

Belongs to the prefoldin subunit beta family. As to quaternary structure, heterohexamer of two PFD-alpha type and four PFD-beta type subunits. Interacts with URI1; the interaction is phosphorylation-dependent and occurs in a growth-dependent manner.

It is found in the nucleus. It localises to the cytoplasm. Its subcellular location is the mitochondrion. Its function is as follows. Binds specifically to cytosolic chaperonin (c-CPN) and transfers target proteins to it. Binds to nascent polypeptide chain and promotes folding in an environment in which there are many competing pathways for nonnative proteins. The polypeptide is Prefoldin subunit 4 (PFDN4) (Homo sapiens (Human)).